The following is a 188-amino-acid chain: UPF0398 protein SE_1135 (188 aa).

This sequence belongs to the UPF0398 family.

In Staphylococcus epidermidis (strain ATCC 12228 / FDA PCI 1200), this protein is UPF0398 protein SE_1135.